We begin with the raw amino-acid sequence, 660 residues long: Peroxisomal acyl-coenzyme A oxidase 1 (660 aa).

Ser-26 carries the phosphoserine modification. N6-succinyllysine is present on residues Lys-89 and Lys-90. Positions 139 and 178 each coordinate FAD. The residue at position 216 (Lys-216) is an N6-acetyllysine. An N6-succinyllysine modification is found at Lys-241. N6-acetyllysine occurs at positions 255, 267, and 272. Position 349 is an N6-succinyllysine (Lys-349). Glu-421 (proton acceptor) is an active-site residue. An N6-acetyllysine; alternate mark is found at Lys-437 and Lys-446. Residues Lys-437 and Lys-446 each carry the N6-succinyllysine; alternate modification. The residue at position 500 (Lys-500) is an N6-acetyllysine. At Lys-512 the chain carries N6-acetyllysine; alternate. At Lys-512 the chain carries N6-succinyllysine; alternate. At Lys-542 the chain carries N6-succinyllysine. Lys-637 is modified (N6-acetyllysine; alternate). Lys-637 is subject to N6-succinyllysine; alternate. An N6-succinyllysine modification is found at Lys-643. Position 649 is a phosphoserine (Ser-649). At Lys-651 the chain carries N6-acetyllysine. Position 654 is an N6-succinyllysine (Lys-654). Positions 658-660 (SKL) match the Microbody targeting signal motif.

It belongs to the acyl-CoA oxidase family. As to quaternary structure, homodimer. Interacts with LONP2. It depends on FAD as a cofactor.

The protein localises to the peroxisome. The catalysed reaction is a 2,3-saturated acyl-CoA + O2 = a (2E)-enoyl-CoA + H2O2. It catalyses the reaction hexadecanoyl-CoA + O2 = (2E)-hexadecenoyl-CoA + H2O2. The enzyme catalyses dodecanoyl-CoA + O2 = (2E)-dodecenoyl-CoA + H2O2. It carries out the reaction octanoyl-CoA + O2 = (2E)-octenoyl-CoA + H2O2. The catalysed reaction is decanoyl-CoA + O2 = (2E)-decenoyl-CoA + H2O2. It catalyses the reaction tetradecanoyl-CoA + O2 = (2E)-tetradecenoyl-CoA + H2O2. The enzyme catalyses hexadecanedioyl-CoA + O2 = (2E)-hexadecenedioyl-CoA + H2O2. It carries out the reaction tetracosanoyl-CoA + O2 = (2E)-tetracosenoyl-CoA + H2O2. The catalysed reaction is glutaryl-CoA + O2 = (2E)-glutaconyl-CoA + H2O2. It catalyses the reaction hexanoyl-CoA + O2 = (2E)-hexenoyl-CoA + H2O2. The enzyme catalyses octadecanoyl-CoA + O2 = (2E)-octadecenoyl-CoA + H2O2. It carries out the reaction (5Z,8Z,11Z,14Z,17Z)-eicosapentaenoyl-CoA + O2 = (2E,5Z,8Z,11Z,14Z,17Z)-icosahexaenoyl-CoA + H2O2. The catalysed reaction is (6Z,9Z,12Z,15Z,18Z,21Z)-tetracosahexaenoyl-CoA + O2 = (2E,6Z,9Z,12Z,15Z,18Z,21Z)-tetracosaheptaenoyl-CoA + H2O2. It participates in lipid metabolism; peroxisomal fatty acid beta-oxidation. In terms of biological role, involved in the initial and rate-limiting step of peroxisomal beta-oxidation of straight-chain saturated and unsaturated very-long-chain fatty acids. Catalyzes the desaturation of fatty acyl-CoAs such as palmitoyl-CoA (hexadecanoyl-CoA) to 2-trans-enoyl-CoAs ((2E)-enoyl-CoAs) such as (2E)-hexadecenoyl-CoA, and donates electrons directly to molecular oxygen (O(2)), thereby producing hydrogen peroxide (H(2)O(2)). Functionally, shows highest activity against medium-chain fatty acyl-CoAs. Shows optimum activity with a chain length of 10 carbons (decanoyl-CoA) in vitro. Its function is as follows. Is active against a much broader range of substrates and shows activity towards long-chain acyl-CoAs. This Pongo abelii (Sumatran orangutan) protein is Peroxisomal acyl-coenzyme A oxidase 1.